We begin with the raw amino-acid sequence, 234 residues long: Uridylate kinase (234 aa).

ATP contacts are provided by residues 8–11 (KLSG), Gly51, and Arg55. Residues Asp68 and 129–136 (TSNPFFTT) each bind UMP. The ATP site is built by Thr156, Tyr162, and Asp165.

Belongs to the UMP kinase family. As to quaternary structure, homohexamer.

It is found in the cytoplasm. The catalysed reaction is UMP + ATP = UDP + ADP. It participates in pyrimidine metabolism; CTP biosynthesis via de novo pathway; UDP from UMP (UMPK route): step 1/1. Its activity is regulated as follows. Inhibited by UTP. Functionally, catalyzes the reversible phosphorylation of UMP to UDP. This is Uridylate kinase from Fervidobacterium nodosum (strain ATCC 35602 / DSM 5306 / Rt17-B1).